A 273-amino-acid polypeptide reads, in one-letter code: Large ribosomal subunit protein uL2 (273 aa).

Residues 221-273 (RGTAMNPVDHPHGGGEGRNFGKHPVTPWGVQTKGKKTRHNKRTDKFIVRRRGK) are disordered. The span at 253–273 (KGKKTRHNKRTDKFIVRRRGK) shows a compositional bias: basic residues.

It belongs to the universal ribosomal protein uL2 family. As to quaternary structure, part of the 50S ribosomal subunit. Forms a bridge to the 30S subunit in the 70S ribosome.

Functionally, one of the primary rRNA binding proteins. Required for association of the 30S and 50S subunits to form the 70S ribosome, for tRNA binding and peptide bond formation. It has been suggested to have peptidyltransferase activity; this is somewhat controversial. Makes several contacts with the 16S rRNA in the 70S ribosome. This is Large ribosomal subunit protein uL2 from Glaesserella parasuis serovar 5 (strain SH0165) (Haemophilus parasuis).